The sequence spans 641 residues: Chaperone protein DnaK (641 aa).

At Thr200 the chain carries Phosphothreonine; by autocatalysis. A compositionally biased stretch (low complexity) spans 605 to 623; sequence AAEQGGSADAASGNAQASK. The interval 605–627 is disordered; the sequence is AAEQGGSADAASGNAQASKAADD.

This sequence belongs to the heat shock protein 70 family.

Acts as a chaperone. The polypeptide is Chaperone protein DnaK (Xanthomonas oryzae pv. oryzae (strain MAFF 311018)).